A 154-amino-acid polypeptide reads, in one-letter code: Aminoalkylphosphonate N-acetyltransferase (154 aa).

The region spanning 14–154 (CELRHATTED…QSHFRFTKAL (141 aa)) is the N-acetyltransferase domain.

Homodimer. Requires a divalent metal cation as cofactor.

The enzyme catalyses aminomethylphosphonate + acetyl-CoA = 2-N-acetamidomethylphosphonate + CoA. It carries out the reaction (S)-1-aminoethylphosphonate + acetyl-CoA = [(1S)-1-acetamidoethyl]phosphonate + CoA. In terms of biological role, aminoalkylphosphonate N-acetyltransferase which is able to acetylate a range of aminoalkylphosphonic acids, including (S)-1-aminoethylphosphonate ((S)-1AEP) and 2-aminoethylphosphonate, using acetyl-CoA as acetyl donor. Its physiological role in S.typhimurium is unclear. However, by acetylating (S)-1AEP, PhnO would protect against the deleterious effects of (S)-1AEP, a structural analog of D-alanine that has antibacterial properties. The sequence is that of Aminoalkylphosphonate N-acetyltransferase from Salmonella typhimurium (strain LT2 / SGSC1412 / ATCC 700720).